A 498-amino-acid chain; its full sequence is Lysine--tRNA ligase (498 aa).

Mg(2+) contacts are provided by Glu411 and Glu418.

The protein belongs to the class-II aminoacyl-tRNA synthetase family. As to quaternary structure, homodimer. Mg(2+) serves as cofactor.

The protein localises to the cytoplasm. It catalyses the reaction tRNA(Lys) + L-lysine + ATP = L-lysyl-tRNA(Lys) + AMP + diphosphate. The chain is Lysine--tRNA ligase from Enterococcus faecalis (strain ATCC 700802 / V583).